The sequence spans 283 residues: Coiled-coil domain-containing protein 42 homolog (283 aa).

Coiled coils occupy residues 31–139 (ATQL…LQRY) and 174–204 (QDLRSRDRNNQTEIERVRREMARYKEAHRVS).

This sequence belongs to the CFAP73 family.

This Monosiga brevicollis (Choanoflagellate) protein is Coiled-coil domain-containing protein 42 homolog.